Here is a 295-residue protein sequence, read N- to C-terminus: tRNA(Ile)-lysidine synthase (295 aa).

S10 to S15 serves as a coordination point for ATP.

It belongs to the tRNA(Ile)-lysidine synthase family.

It is found in the cytoplasm. It carries out the reaction cytidine(34) in tRNA(Ile2) + L-lysine + ATP = lysidine(34) in tRNA(Ile2) + AMP + diphosphate + H(+). Functionally, ligates lysine onto the cytidine present at position 34 of the AUA codon-specific tRNA(Ile) that contains the anticodon CAU, in an ATP-dependent manner. Cytidine is converted to lysidine, thus changing the amino acid specificity of the tRNA from methionine to isoleucine. In Malacoplasma penetrans (strain HF-2) (Mycoplasma penetrans), this protein is tRNA(Ile)-lysidine synthase.